The following is a 43-amino-acid chain: XNPPQDWLPMNGLYYKIFDELKAWKDAEMFCRKYKPGWHLASF.

The C-type lectin domain maps to 10 to 43 (MNGLYYKIFDELKAWKDAEMFCRKYKPGWHLASF).

This sequence belongs to the true venom lectin family. Monomer. Expressed by the venom gland.

The protein localises to the secreted. Its activity is regulated as follows. Inhibited by 1,10-phenanthroline and EDTA. Functionally, may have both metalloproteinase and lectin activities. Induces local hemorrhage in the skin of rats. Degrades type-IV collagen, gelatin, laminin and fibronectin. Has hemagglutinating activity on red blood cells. This Bothrops jararaca (Jararaca) protein is Jararafibrase-3.